The sequence spans 85 residues: Latartoxin-1a (85 aa).

Positions 1–19 (MKVLVFAIVCSVLLQVVLS) are cleaved as a signal peptide. Residues 20–25 (ADEEAR) constitute a propeptide, removed in mature form. The Processing quadruplet motif motif lies at 22-25 (EEAR). 4 disulfide bridges follow: cysteine 27–cysteine 42, cysteine 34–cysteine 47, cysteine 41–cysteine 64, and cysteine 49–cysteine 62.

It belongs to the neurotoxin 19 (CSTX) family. Post-translationally, contains 4 disulfide bonds. In terms of processing, cleavage of the propeptide depends on the processing quadruplet motif (XXXR, with at least one of X being E). In terms of tissue distribution, expressed by the venom gland.

The protein localises to the secreted. Insect toxin. Causes paralysis in larvae of C.vicina by depolarizing membranes at the neuromuscular junction. This Lachesana tarabaevi (Spider) protein is Latartoxin-1a.